The sequence spans 151 residues: Aspartate carbamoyltransferase regulatory chain (151 aa).

Zn(2+) contacts are provided by C107, C112, C135, and C138.

This sequence belongs to the PyrI family. As to quaternary structure, contains catalytic and regulatory chains. Zn(2+) is required as a cofactor.

Involved in allosteric regulation of aspartate carbamoyltransferase. The protein is Aspartate carbamoyltransferase regulatory chain of Thermococcus onnurineus (strain NA1).